Reading from the N-terminus, the 410-residue chain is Replication-associated protein G2P (410 aa).

The residue at position 1 (Met1) is an N-formylmethionine.

It belongs to the inovirus G2P protein family.

The catalysed reaction is ATP + (deoxyribonucleotide)n-3'-hydroxyl + 5'-phospho-(deoxyribonucleotide)m = (deoxyribonucleotide)n+m + AMP + diphosphate.. In terms of biological role, isoform G2P plays an essential role in viral DNA replication. Binds the origin of replication and cleaves the dsDNA replicative form I (RFI) and becomes covalently bound to it via phosphotyrosine bond, generating the dsDNA replicative form II (RFII). In turn, viral DNA replication initiates at the 3'-OH of the cleavage site. After one round of rolling circle synthesis, protein G2P is linked to the newly synthesized ssDNA and joins the ends of the displaced strand to generate a circular single-stranded molecule ready to be packed into a virion. Functionally, isoform G10P protein binds to double-stranded DNA and prevents hydrolysis by nucleases. Additionally, G10P is an inhibitor of DNA replication and may have a role in the transition from semiconservative replicative form DNA replication to single-stranded DNA synthesis in the life cycle. The chain is Replication-associated protein G2P (II) from Enterobacteria phage fd (Bacteriophage fd).